The following is a 116-amino-acid chain: LQEIFRGVRKAVKSHGCKRAILVGHNSSFDLAFLNAAVARCDIKRNPFHPFSSFDTATLAGLAYGQTVLAKACQSAGIEFDGREAHSARYDTEKTAELFCGIVNRWKEMGGWVDFA.

The Exonuclease domain maps to 18–99 (KRAILVGHNS…YDTEKTAELF (82 aa)). Histidine 86 (proton donor/acceptor) is an active-site residue.

The protein belongs to the RNase T family. Homodimer.

In terms of biological role, trims short 3' overhangs of a variety of RNA species, leaving a one or two nucleotide 3' overhang. Responsible for the end-turnover of tRNA: specifically removes the terminal AMP residue from uncharged tRNA (tRNA-C-C-A). Also appears to be involved in tRNA biosynthesis. The protein is Ribonuclease T of Azotobacter vinelandii.